The primary structure comprises 293 residues: Homoserine kinase (293 aa).

84-94 (PFSRGLGSSSS) is an ATP binding site.

Belongs to the GHMP kinase family. Homoserine kinase subfamily.

The protein resides in the cytoplasm. The enzyme catalyses L-homoserine + ATP = O-phospho-L-homoserine + ADP + H(+). The protein operates within amino-acid biosynthesis; L-threonine biosynthesis; L-threonine from L-aspartate: step 4/5. Functionally, catalyzes the ATP-dependent phosphorylation of L-homoserine to L-homoserine phosphate. The polypeptide is Homoserine kinase (Campylobacter fetus subsp. fetus (strain 82-40)).